Consider the following 63-residue polypeptide: UPF0434 protein Mmar10_2939 (63 aa).

This sequence belongs to the UPF0434 family.

The chain is UPF0434 protein Mmar10_2939 from Maricaulis maris (strain MCS10) (Caulobacter maris).